We begin with the raw amino-acid sequence, 152 residues long: Small ribosomal subunit protein bS6 (152 aa).

Residues 94-152 (VKQEGPLPTPKPSNKSSTQSENKDNPETKVESKEEQSVTNSDTSTTKKDDNEIKENTES) are disordered. Composition is skewed to basic and acidic residues over residues 114–129 (ENKDNPETKVESKEEQ) and 138–152 (TTKKDDNEIKENTES).

This sequence belongs to the bacterial ribosomal protein bS6 family.

Its function is as follows. Binds together with bS18 to 16S ribosomal RNA. The sequence is that of Small ribosomal subunit protein bS6 from Prochlorococcus marinus (strain MIT 9312).